We begin with the raw amino-acid sequence, 505 residues long: AMP phosphorylase (505 aa).

AMP contacts are provided by residues Gly-170, 196–201, and Thr-205; that span reads SRAITS. Asp-258 acts as the Proton donor in catalysis. Ser-266 and Lys-290 together coordinate AMP.

Belongs to the thymidine/pyrimidine-nucleoside phosphorylase family. Type 2 subfamily.

The enzyme catalyses AMP + phosphate = alpha-D-ribose 1,5-bisphosphate + adenine. The catalysed reaction is CMP + phosphate = cytosine + alpha-D-ribose 1,5-bisphosphate. It catalyses the reaction UMP + phosphate = alpha-D-ribose 1,5-bisphosphate + uracil. Catalyzes the conversion of AMP and phosphate to adenine and ribose 1,5-bisphosphate (R15P). Exhibits phosphorylase activity toward CMP and UMP in addition to AMP. Functions in an archaeal AMP degradation pathway, together with R15P isomerase and RubisCO. This chain is AMP phosphorylase, found in Methanococcus maripaludis (strain C5 / ATCC BAA-1333).